The following is a 673-amino-acid chain: UvrABC system protein B (673 aa).

The region spanning 26–414 (ANFEAGLAKQ…AGEITELVVR (389 aa)) is the Helicase ATP-binding domain. 39–46 (GVTGSGKT) lines the ATP pocket. The short motif at 92–115 (YYDYYQPEAYVPSSDTFIEKDSSI) is the Beta-hairpin element. A Helicase C-terminal domain is found at 431–597 (QVDDLMSEVH…SVARPISDIM (167 aa)). The interval 601–626 (REDAAEKKAGKGRSKSRQVAEEPADY) is disordered. One can recognise a UVR domain in the interval 635–670 (AGKLKALEQKMYQHAKDLEFEAAAQIRDQILKLKAA).

Belongs to the UvrB family. As to quaternary structure, forms a heterotetramer with UvrA during the search for lesions. Interacts with UvrC in an incision complex.

The protein localises to the cytoplasm. Its function is as follows. The UvrABC repair system catalyzes the recognition and processing of DNA lesions. A damage recognition complex composed of 2 UvrA and 2 UvrB subunits scans DNA for abnormalities. Upon binding of the UvrA(2)B(2) complex to a putative damaged site, the DNA wraps around one UvrB monomer. DNA wrap is dependent on ATP binding by UvrB and probably causes local melting of the DNA helix, facilitating insertion of UvrB beta-hairpin between the DNA strands. Then UvrB probes one DNA strand for the presence of a lesion. If a lesion is found the UvrA subunits dissociate and the UvrB-DNA preincision complex is formed. This complex is subsequently bound by UvrC and the second UvrB is released. If no lesion is found, the DNA wraps around the other UvrB subunit that will check the other stand for damage. This is UvrABC system protein B from Xanthomonas campestris pv. campestris (strain 8004).